The sequence spans 452 residues: Probable glycine dehydrogenase (decarboxylating) subunit 1 (452 aa).

It belongs to the GcvP family. N-terminal subunit subfamily. In terms of assembly, the glycine cleavage system is composed of four proteins: P, T, L and H. In this organism, the P 'protein' is a heterodimer of two subunits.

The enzyme catalyses N(6)-[(R)-lipoyl]-L-lysyl-[glycine-cleavage complex H protein] + glycine + H(+) = N(6)-[(R)-S(8)-aminomethyldihydrolipoyl]-L-lysyl-[glycine-cleavage complex H protein] + CO2. In terms of biological role, the glycine cleavage system catalyzes the degradation of glycine. The P protein binds the alpha-amino group of glycine through its pyridoxal phosphate cofactor; CO(2) is released and the remaining methylamine moiety is then transferred to the lipoamide cofactor of the H protein. The polypeptide is Probable glycine dehydrogenase (decarboxylating) subunit 1 (Sphingopyxis alaskensis (strain DSM 13593 / LMG 18877 / RB2256) (Sphingomonas alaskensis)).